We begin with the raw amino-acid sequence, 186 residues long: MIIGVLAIQGDVEEHEEAIKKAGYEAKKVKRVEDLEGIDALIIPGGESTAIGKLMKKYGLLEKIKNSNLPILGTCAGMVLLSKGTGINQILLELMDITVKRNAYGRQVDSFEKEIEFKDLGKVYGVFIRAPVVDKILSDDVEVIARDGDKIVGVKQGKYMALSFHPELSEDGYKVYKYFVENCVKK.

Residue 46-48 (GES) coordinates L-glutamine. Cysteine 75 serves as the catalytic Nucleophile. L-glutamine-binding positions include arginine 101 and 128–129 (IR). Residues histidine 165 and glutamate 167 each act as charge relay system in the active site.

The protein belongs to the glutaminase PdxT/SNO family. In the presence of PdxS, forms a dodecamer of heterodimers. Only shows activity in the heterodimer.

The catalysed reaction is aldehydo-D-ribose 5-phosphate + D-glyceraldehyde 3-phosphate + L-glutamine = pyridoxal 5'-phosphate + L-glutamate + phosphate + 3 H2O + H(+). The enzyme catalyses L-glutamine + H2O = L-glutamate + NH4(+). It participates in cofactor biosynthesis; pyridoxal 5'-phosphate biosynthesis. Catalyzes the hydrolysis of glutamine to glutamate and ammonia as part of the biosynthesis of pyridoxal 5'-phosphate. The resulting ammonia molecule is channeled to the active site of PdxS. This is Pyridoxal 5'-phosphate synthase subunit PdxT from Methanocaldococcus jannaschii (strain ATCC 43067 / DSM 2661 / JAL-1 / JCM 10045 / NBRC 100440) (Methanococcus jannaschii).